The following is a 75-amino-acid chain: MELEAAKMIGAGLAAIALAGAGVGIGIIFGNYLSGAMRNPSAAQKQFPNLLLGFALAEATGLFGLVVALIILFAF.

Helical transmembrane passes span I9 to F29 and F54 to A74.

The protein belongs to the ATPase C chain family. As to quaternary structure, F-type ATPases have 2 components, F(1) - the catalytic core - and F(0) - the membrane proton channel. F(1) has five subunits: alpha(3), beta(3), gamma(1), delta(1), epsilon(1). F(0) has three main subunits: a(1), b(2) and c(10-14). The alpha and beta chains form an alternating ring which encloses part of the gamma chain. F(1) is attached to F(0) by a central stalk formed by the gamma and epsilon chains, while a peripheral stalk is formed by the delta and b chains.

The protein resides in the cell inner membrane. F(1)F(0) ATP synthase produces ATP from ADP in the presence of a proton or sodium gradient. F-type ATPases consist of two structural domains, F(1) containing the extramembraneous catalytic core and F(0) containing the membrane proton channel, linked together by a central stalk and a peripheral stalk. During catalysis, ATP synthesis in the catalytic domain of F(1) is coupled via a rotary mechanism of the central stalk subunits to proton translocation. Functionally, key component of the F(0) channel; it plays a direct role in translocation across the membrane. A homomeric c-ring of between 10-14 subunits forms the central stalk rotor element with the F(1) delta and epsilon subunits. This chain is ATP synthase subunit c, found in Pelagibacter ubique (strain HTCC1062).